The sequence spans 502 residues: Mannitol 2-dehydrogenase (502 aa).

37–48 (IVHIGVGGFHRA) contacts NAD(+).

It belongs to the mannitol dehydrogenase family. Monomer.

It carries out the reaction D-mannitol + NAD(+) = D-fructose + NADH + H(+). Catalyzes the NAD(H)-dependent interconversion of D-fructose and D-mannitol in the mannitol metabolic pathway. The sequence is that of Mannitol 2-dehydrogenase from Neosartorya fischeri (strain ATCC 1020 / DSM 3700 / CBS 544.65 / FGSC A1164 / JCM 1740 / NRRL 181 / WB 181) (Aspergillus fischerianus).